The sequence spans 507 residues: MLNADLKQQLKQLLELMEGNVEFVASLGSDDKSKELKELLTEISDMSPRLSLSEKSLKRTPSFSVNRPGEETGVTFAGIPLGHEFNSLVLAILQVSGRAPKEKQSIIDQIKNLEGSFHFETFISLTCQKCPDVVQALNLMSVINPNITHSMIDGAVFREESENIMAVPAVFLNGEEFGNGRMTIQDILSKLGSTADASEFENKEPYDVLIVGGGPASGSAAIYTARKGLRTGIVADRIGGQVNDTAGIENFITVKETTGSEFSSNLAAHIDQYDIDAMTGIRATDIEKTDEAIKVTLENGAVLESKTVIIATGAGWRKLNIPGEEQLINKGVAFCPHCDGPLFENKDVAVIGGGNSGVEAAIDLAGIVNHVTLFEFASELKADNVLQDRLRSLSNVDIKTNAKTTEVVGENHVTGIRYEDMSTGEEHLLNLDGIFVQIGLLPNTSWLKDAVELNERGEIVIDRNNNTNVPGIFAAGDVTDQKNKQIIISMGAGANAALNAFDYIIRN.

207–222 (DVLIVGGGPASGSAAI) provides a ligand contact to FAD. Cys-335 and Cys-338 are disulfide-bonded. 347–361 (DVAVIGGGNSGVEAA) serves as a coordination point for NAD(+). 467–477 (TNVPGIFAAGD) contributes to the FAD binding site.

This sequence belongs to the class-II pyridine nucleotide-disulfide oxidoreductase family. As to quaternary structure, homodimer. It depends on FAD as a cofactor.

Its function is as follows. Serves to protect the cell against DNA damage by alkyl hydroperoxides. It can use either NADH or NADPH as electron donor for direct reduction of redox dyes or of alkyl hydroperoxides when combined with the AhpC protein. In Staphylococcus aureus (strain MRSA252), this protein is Alkyl hydroperoxide reductase subunit F (ahpF).